The primary structure comprises 808 residues: Probable inorganic carbon transporter subunit DabA (808 aa).

Residues Cys335, Asp337, His497, and Cys512 each coordinate Zn(2+).

This sequence belongs to the inorganic carbon transporter (TC 9.A.2) DabA family. As to quaternary structure, forms a complex with DabB. Requires Zn(2+) as cofactor.

It is found in the cell inner membrane. In terms of biological role, part of an energy-coupled inorganic carbon pump. The sequence is that of Probable inorganic carbon transporter subunit DabA from Rhodopseudomonas palustris (strain ATCC BAA-98 / CGA009).